The following is a 134-amino-acid chain: Protein NrdI (134 aa).

This sequence belongs to the NrdI family.

Probably involved in ribonucleotide reductase function. This chain is Protein NrdI, found in Rhizobium etli (strain CIAT 652).